Here is a 96-residue protein sequence, read N- to C-terminus: Small ribosomal subunit protein uS15 (96 aa).

Belongs to the universal ribosomal protein uS15 family. Part of the 30S ribosomal subunit. Forms a bridge to the 50S subunit in the 70S ribosome, contacting the 23S rRNA.

Its function is as follows. One of the primary rRNA binding proteins, it binds directly to 16S rRNA where it helps nucleate assembly of the platform of the 30S subunit by binding and bridging several RNA helices of the 16S rRNA. In terms of biological role, forms an intersubunit bridge (bridge B4) with the 23S rRNA of the 50S subunit in the ribosome. This is Small ribosomal subunit protein uS15 from Streptomyces griseus subsp. griseus (strain JCM 4626 / CBS 651.72 / NBRC 13350 / KCC S-0626 / ISP 5235).